Consider the following 98-residue polypeptide: NADH-ubiquinone oxidoreductase chain 4L (98 aa).

The next 3 helical transmembrane spans lie at 1-21 (MSLVYMNIMTAFTVSLTGLLM), 29-49 (SLLCLEGMMLALFVMATLTIL), and 61-81 (IILLVFAACEAALGLSLLVMV).

This sequence belongs to the complex I subunit 4L family. As to quaternary structure, core subunit of respiratory chain NADH dehydrogenase (Complex I) which is composed of 45 different subunits.

It localises to the mitochondrion inner membrane. The enzyme catalyses a ubiquinone + NADH + 5 H(+)(in) = a ubiquinol + NAD(+) + 4 H(+)(out). Core subunit of the mitochondrial membrane respiratory chain NADH dehydrogenase (Complex I) which catalyzes electron transfer from NADH through the respiratory chain, using ubiquinone as an electron acceptor. Part of the enzyme membrane arm which is embedded in the lipid bilayer and involved in proton translocation. The sequence is that of NADH-ubiquinone oxidoreductase chain 4L (MT-ND4L) from Elaphodus cephalophus (Tufted deer).